The sequence spans 184 residues: Probable RNA 2'-phosphotransferase (184 aa).

This sequence belongs to the KptA/TPT1 family.

Its function is as follows. Removes the 2'-phosphate from RNA via an intermediate in which the phosphate is ADP-ribosylated by NAD followed by a presumed transesterification to release the RNA and generate ADP-ribose 1''-2''-cyclic phosphate (APPR&gt;P). May function as an ADP-ribosylase. The polypeptide is Probable RNA 2'-phosphotransferase (Escherichia coli O139:H28 (strain E24377A / ETEC)).